The primary structure comprises 140 residues: Transcription antitermination protein NusB (140 aa).

The protein belongs to the NusB family.

Its function is as follows. Involved in transcription antitermination. Required for transcription of ribosomal RNA (rRNA) genes. Binds specifically to the boxA antiterminator sequence of the ribosomal RNA (rrn) operons. In Myxococcus xanthus (strain DK1622), this protein is Transcription antitermination protein NusB.